The chain runs to 292 residues: tRNA-cytidine(32) 2-sulfurtransferase (292 aa).

The PP-loop motif signature appears at 62 to 67 (SGGKDS). [4Fe-4S] cluster is bound by residues Cys137, Cys140, and Cys228.

The protein belongs to the TtcA family. Homodimer. Mg(2+) serves as cofactor. It depends on [4Fe-4S] cluster as a cofactor.

Its subcellular location is the cytoplasm. The enzyme catalyses cytidine(32) in tRNA + S-sulfanyl-L-cysteinyl-[cysteine desulfurase] + AH2 + ATP = 2-thiocytidine(32) in tRNA + L-cysteinyl-[cysteine desulfurase] + A + AMP + diphosphate + H(+). Its pathway is tRNA modification. Catalyzes the ATP-dependent 2-thiolation of cytidine in position 32 of tRNA, to form 2-thiocytidine (s(2)C32). The sulfur atoms are provided by the cysteine/cysteine desulfurase (IscS) system. This chain is tRNA-cytidine(32) 2-sulfurtransferase, found in Brucella anthropi (strain ATCC 49188 / DSM 6882 / CCUG 24695 / JCM 21032 / LMG 3331 / NBRC 15819 / NCTC 12168 / Alc 37) (Ochrobactrum anthropi).